A 448-amino-acid chain; its full sequence is MSRTLTSRQAEELHKSIIAYLAANNFQDSVTAMRTELNLGEEIFDPATAKKYETLLEKKWTSVVRLQKKTELDSATPTSLSNRKQDPASWLPAGPPRHVLQSHRTPINCVAFHPIYSSIASGDEDAIIKIWDWEFGELERTVKGHTKAVLDLDYGGPKGHTLLASCSSDLTIKLWDPSDEYKNIRTLPGHDHSVSAVRFIPSGAPGAPLSGNLLASASRDVTVRIWDVTTGYCLKTIRGHSDWIRDVSPSLDGKYLLSTGNDRTLRLWDISMNTPETKMVMIGHEHCVECCAFAPPTSYQHLATMAGLKKAPPASSTAEFMATGSRDKTIRLWDSRGTCIKTLIGHDNWVRSLVFHPSGKFLLSVSDDKTIRCWDLSQEGKCVKTLEGMHEHFITSLRWAPPITKGPADEANGEIGTPKKAAAAPLDVQIRCVIATGSVDTSLRIFSR.

The 33-residue stretch at 9-41 folds into the LisH domain; sequence QAEELHKSIIAYLAANNFQDSVTAMRTELNLGE. The interval 74–95 is disordered; that stretch reads SATPTSLSNRKQDPASWLPAGP. 7 WD repeats span residues 102–143, 145–185, 189–236, 239–278, 283–343, 345–384, and 389–444; these read SHRT…RTVK, HTKA…KNIR, GHDH…CLKT, GHSD…PETK, GHEH…IKTL, GHDN…KCVK, and MHEH…TSLR.

Belongs to the WD repeat LIS1/nudF family. Self-associates. Interacts with NDL1 and dynein.

It is found in the cytoplasm. The protein resides in the cytoskeleton. The protein localises to the spindle pole. Functionally, positively regulates the activity of the minus-end directed microtubule motor protein dynein. May enhance dynein-mediated microtubule sliding by targeting dynein to the microtubule plus end. Required for nuclear migration during vegetative growth as well as development. Required for retrograde early endosome (EE) transport from the hyphal tip. Required for localization of dynein to the mitotic spindle poles. Recruits additional proteins to the dynein complex at SPBs. This chain is Nuclear distribution protein PAC1, found in Fusarium vanettenii (strain ATCC MYA-4622 / CBS 123669 / FGSC 9596 / NRRL 45880 / 77-13-4) (Fusarium solani subsp. pisi).